Here is a 408-residue protein sequence, read N- to C-terminus: Histidine--tRNA ligase (408 aa).

This sequence belongs to the class-II aminoacyl-tRNA synthetase family. As to quaternary structure, homodimer.

The protein localises to the cytoplasm. The catalysed reaction is tRNA(His) + L-histidine + ATP = L-histidyl-tRNA(His) + AMP + diphosphate + H(+). This chain is Histidine--tRNA ligase, found in Campylobacter jejuni subsp. doylei (strain ATCC BAA-1458 / RM4099 / 269.97).